The primary structure comprises 88 residues: Small ribosomal subunit protein bS20 (88 aa).

2 disordered regions span residues M1 to K25 and H68 to A88.

The protein belongs to the bacterial ribosomal protein bS20 family.

Functionally, binds directly to 16S ribosomal RNA. In Cutibacterium acnes (strain DSM 16379 / KPA171202) (Propionibacterium acnes), this protein is Small ribosomal subunit protein bS20.